Here is a 558-residue protein sequence, read N- to C-terminus: Polysialic acid transport protein KpsD (558 aa).

The signal sequence occupies residues 1–20; sequence MKLFKSILLIAACHAAQASA.

The protein to E.coli K1 KpsD.

It localises to the periplasm. In terms of biological role, involved in the translocation of the polysialic acid capsule across the outer membrane to the cell surface. May function as the periplasmic binding element of the PSA transport system, in which it transiently interacts with the membrane component of the transporter, binds polysaccharide and transports the polymer to a component in the outer membrane. The sequence is that of Polysialic acid transport protein KpsD (kpsD) from Escherichia coli.